The sequence spans 347 residues: Molybdenum cofactor biosynthesis bifunctional protein (347 aa).

The interval 1–158 is molybdenum cofactor biosynthesis protein C; sequence MFTHLDENQQ…EKTGGKADVS (158 aa). Residues 75 to 77 and 116 to 117 each bind substrate; these read FCH and ME. Asp-131 functions as the For MoaC activity in the catalytic mechanism. A molybdenum cofactor guanylyltransferase region spans residues 159-347; it reads QTPLYGLVLT…NSPEDYGQIN (189 aa). GTP-binding positions include 167–169, Lys-179, Asp-226, and Asp-255; that span reads LTG. Residue Asp-255 participates in Mg(2+) binding.

This sequence in the N-terminal section; belongs to the MoaC family. It in the C-terminal section; belongs to the MobA family. It depends on Mg(2+) as a cofactor.

Its subcellular location is the cytoplasm. The enzyme catalyses Mo-molybdopterin + GTP + H(+) = Mo-molybdopterin guanine dinucleotide + diphosphate. It carries out the reaction (8S)-3',8-cyclo-7,8-dihydroguanosine 5'-triphosphate = cyclic pyranopterin phosphate + diphosphate. It functions in the pathway cofactor biosynthesis; molybdopterin biosynthesis. Its function is as follows. Catalyzes the conversion of (8S)-3',8-cyclo-7,8-dihydroguanosine 5'-triphosphate to cyclic pyranopterin monophosphate (cPMP). In terms of biological role, transfers a GMP moiety from GTP to Mo-molybdopterin (Mo-MPT) cofactor (Moco or molybdenum cofactor) to form Mo-molybdopterin guanine dinucleotide (Mo-MGD) cofactor. This Synechocystis sp. (strain ATCC 27184 / PCC 6803 / Kazusa) protein is Molybdenum cofactor biosynthesis bifunctional protein (moaC/mobA).